The following is a 635-amino-acid chain: Dihydrolipoyllysine-residue acetyltransferase component of pyruvate dehydrogenase complex, mitochondrial (635 aa).

Residues Gly83–Val160 enclose the Lipoyl-binding 1 domain. At Lys124 the chain carries N6-lipoyllysine. The disordered stretch occupies residues Lys171–Pro204. Residues Lys174–Val184 are compositionally biased toward polar residues. Positions Glu187–Lys197 are enriched in basic and acidic residues. The region spanning His206–Val283 is the Lipoyl-binding 2 domain. Lys247 bears the N6-lipoyllysine mark. The disordered stretch occupies residues Tyr295–Gly338. A compositionally biased stretch (low complexity) spans Glu298–Thr334. Residues Phe342 to Val379 form the Peripheral subunit-binding (PSBD) domain. Positions Lys382–Pro413 are disordered. The segment covering Gln387–Thr404 has biased composition (low complexity). Residues Pro403–Leu635 form a catalytic region.

It belongs to the 2-oxoacid dehydrogenase family. In terms of assembly, 20 to 30 alpha(2)-beta(2) tetramers of E1 + 6 homodimers of E3 + 60 copies of E2. The cofactor is (R)-lipoate.

It is found in the mitochondrion matrix. It carries out the reaction N(6)-[(R)-dihydrolipoyl]-L-lysyl-[protein] + acetyl-CoA = N(6)-[(R)-S(8)-acetyldihydrolipoyl]-L-lysyl-[protein] + CoA. The pyruvate dehydrogenase complex catalyzes the overall conversion of pyruvate to acetyl-CoA and CO(2). It contains multiple copies of three enzymatic components: pyruvate dehydrogenase (E1), dihydrolipoamide acetyltransferase (E2) and lipoamide dehydrogenase (E3). This Dictyostelium discoideum (Social amoeba) protein is Dihydrolipoyllysine-residue acetyltransferase component of pyruvate dehydrogenase complex, mitochondrial (pdhC).